An 838-amino-acid polypeptide reads, in one-letter code: Protein translocase subunit SecA 1 (838 aa).

Residues Gln85, 103–107 (GEGKT), and Asp493 each bind ATP. The Zn(2+) site is built by Cys823, Cys825, Cys834, and His835.

It belongs to the SecA family. In terms of assembly, monomer and homodimer. Part of the essential Sec protein translocation apparatus which comprises SecA, SecYEG and auxiliary proteins SecDF. Other proteins may also be involved. The cofactor is Zn(2+).

Its subcellular location is the cell membrane. The protein resides in the cytoplasm. It carries out the reaction ATP + H2O + cellular proteinSide 1 = ADP + phosphate + cellular proteinSide 2.. Part of the Sec protein translocase complex. Interacts with the SecYEG preprotein conducting channel. Has a central role in coupling the hydrolysis of ATP to the transfer of proteins into and across the cell membrane, serving as an ATP-driven molecular motor driving the stepwise translocation of polypeptide chains across the membrane. The polypeptide is Protein translocase subunit SecA 1 (Streptococcus gordonii).